The primary structure comprises 462 residues: N-myc proto-oncogene protein (462 aa).

The segment at 19–47 is interaction with AURKA; that stretch reads LEFDSLQPCFYPDEDDFYFGGPDSTPPGE. The interval 61–90 is interaction with AURKA and FBXW7; sequence LSPSRAFPEHSPEPSNWATEMLLPEADLWG. Residues 76-85 carry the 9aaTAD motif; it reads NWATEMLLPE. Disordered stretches follow at residues 134–177, 232–289, and 332–390; these read KLQH…ATLP, AAPA…SSNN, and APSP…LERQ. Composition is skewed to low complexity over residues 143 to 176 and 232 to 244; these read GVSS…GATL and AAPA…PASS. The span at 257-276 shows a compositional bias: acidic residues; the sequence is TLSDSDDEDDEEEDEEEEID. Phosphoserine; by CK2 occurs at positions 259 and 261. A bHLH domain is found at 379-431; sequence ERRRNHNILERQRRNDLRSSFLTLRDHVPELVKNEKAAKVVILKKATEYVHAL. The interval 431-452 is leucine-zipper; the sequence is LQANEHQLLLEKEKLQARQQQL.

As to quaternary structure, efficient DNA binding requires dimerization with another bHLH protein. Binds DNA as a heterodimer with MAX. Interacts with KDM5A, KDM5B and HUWE1. Interacts with MYCNOS. Interacts with AURKA; interaction is phospho-independent and triggers AURKA activation; AURKA competes with FBXW7 for binding to unphosphorylated MYCN but not for binding to unphosphorylated MYCN. Interacts with FBXW7; FBXW7 competes with AURKA for binding to unphosphorylated MYCN but not for binding to phosphorylated MYCN. Post-translationally, phosphorylated by GSK3-beta which may promote its degradation. Phosphorylated by AURKA.

The protein localises to the nucleus. Its function is as follows. Positively regulates the transcription of MYCNOS in neuroblastoma cells. This chain is N-myc proto-oncogene protein (Mycn), found in Mus musculus (Mouse).